The primary structure comprises 53 residues: MPQMAPISWLTLFFVFSITLVIFNIKNYFCFSYNSTETSQNLNIKQHKLNWKW.

A helical transmembrane segment spans residues 5–25 (APISWLTLFFVFSITLVIFNI).

Belongs to the ATPase protein 8 family. As to quaternary structure, F-type ATPases have 2 components, CF(1) - the catalytic core - and CF(0) - the membrane proton channel.

The protein localises to the mitochondrion membrane. In terms of biological role, mitochondrial membrane ATP synthase (F(1)F(O) ATP synthase or Complex V) produces ATP from ADP in the presence of a proton gradient across the membrane which is generated by electron transport complexes of the respiratory chain. F-type ATPases consist of two structural domains, F(1) - containing the extramembraneous catalytic core and F(0) - containing the membrane proton channel, linked together by a central stalk and a peripheral stalk. During catalysis, ATP synthesis in the catalytic domain of F(1) is coupled via a rotary mechanism of the central stalk subunits to proton translocation. Part of the complex F(0) domain. Minor subunit located with subunit a in the membrane. The chain is ATP synthase protein 8 from Aedes aegypti (Yellowfever mosquito).